The primary structure comprises 179 residues: Large ribosomal subunit protein uL5 (179 aa).

This sequence belongs to the universal ribosomal protein uL5 family. In terms of assembly, part of the 50S ribosomal subunit; part of the 5S rRNA/L5/L18/L25 subcomplex. Contacts the 5S rRNA and the P site tRNA. Forms a bridge to the 30S subunit in the 70S ribosome.

In terms of biological role, this is one of the proteins that bind and probably mediate the attachment of the 5S RNA into the large ribosomal subunit, where it forms part of the central protuberance. In the 70S ribosome it contacts protein S13 of the 30S subunit (bridge B1b), connecting the 2 subunits; this bridge is implicated in subunit movement. Contacts the P site tRNA; the 5S rRNA and some of its associated proteins might help stabilize positioning of ribosome-bound tRNAs. The protein is Large ribosomal subunit protein uL5 of Halalkalibacterium halodurans (strain ATCC BAA-125 / DSM 18197 / FERM 7344 / JCM 9153 / C-125) (Bacillus halodurans).